We begin with the raw amino-acid sequence, 628 residues long: tRNA uridine 5-carboxymethylaminomethyl modification enzyme MnmG (628 aa).

13–18 (GAGHAG) provides a ligand contact to FAD. 273 to 287 (GPRYCPSIEDKIVRF) is an NAD(+) binding site.

It belongs to the MnmG family. As to quaternary structure, homodimer. Heterotetramer of two MnmE and two MnmG subunits. It depends on FAD as a cofactor.

It is found in the cytoplasm. Its function is as follows. NAD-binding protein involved in the addition of a carboxymethylaminomethyl (cmnm) group at the wobble position (U34) of certain tRNAs, forming tRNA-cmnm(5)s(2)U34. The protein is tRNA uridine 5-carboxymethylaminomethyl modification enzyme MnmG of Buchnera aphidicola subsp. Acyrthosiphon pisum (strain Tuc7).